The following is a 96-amino-acid chain: Large ribosomal subunit protein bL27 (96 aa).

The propeptide occupies 1-10 (MLLKLNIQLF).

The protein belongs to the bacterial ribosomal protein bL27 family. In terms of processing, the N-terminus is cleaved by ribosomal processing cysteine protease Prp.

The chain is Large ribosomal subunit protein bL27 from Phytoplasma mali (strain AT).